Consider the following 865-residue polypeptide: Protein translocase subunit SecA (865 aa).

ATP contacts are provided by residues Gln93, 111–115 (GEGKT), and Asp501. Zn(2+) contacts are provided by Cys841, Cys843, Cys852, and Cys853.

Belongs to the SecA family. Monomer and homodimer. Part of the essential Sec protein translocation apparatus which comprises SecA, SecYEG and auxiliary proteins SecDF-YajC and YidC. The cofactor is Zn(2+).

It localises to the cell inner membrane. The protein localises to the cytoplasm. The catalysed reaction is ATP + H2O + cellular proteinSide 1 = ADP + phosphate + cellular proteinSide 2.. Part of the Sec protein translocase complex. Interacts with the SecYEG preprotein conducting channel. Has a central role in coupling the hydrolysis of ATP to the transfer of proteins into and across the cell membrane, serving as an ATP-driven molecular motor driving the stepwise translocation of polypeptide chains across the membrane. The sequence is that of Protein translocase subunit SecA from Helicobacter pylori (strain P12).